We begin with the raw amino-acid sequence, 469 residues long: Ribulose bisphosphate carboxylase large chain (469 aa).

Lysine 5 bears the N6,N6,N6-trimethyllysine mark. Asparagine 114 and threonine 164 together coordinate substrate. Catalysis depends on lysine 166, which acts as the Proton acceptor. Lysine 168 contacts substrate. Positions 192, 194, and 195 each coordinate Mg(2+). Position 192 is an N6-carboxylysine (lysine 192). Histidine 285 serves as the catalytic Proton acceptor. 3 residues coordinate substrate: arginine 286, histidine 318, and serine 370.

The protein belongs to the RuBisCO large chain family. Type I subfamily. As to quaternary structure, heterohexadecamer of 8 large chains and 8 small chains; disulfide-linked. The disulfide link is formed within the large subunit homodimers. Mg(2+) serves as cofactor. Post-translationally, the disulfide bond which can form in the large chain dimeric partners within the hexadecamer appears to be associated with oxidative stress and protein turnover.

It is found in the plastid. The protein resides in the chloroplast. It catalyses the reaction 2 (2R)-3-phosphoglycerate + 2 H(+) = D-ribulose 1,5-bisphosphate + CO2 + H2O. It carries out the reaction D-ribulose 1,5-bisphosphate + O2 = 2-phosphoglycolate + (2R)-3-phosphoglycerate + 2 H(+). In terms of biological role, ruBisCO catalyzes two reactions: the carboxylation of D-ribulose 1,5-bisphosphate, the primary event in carbon dioxide fixation, as well as the oxidative fragmentation of the pentose substrate in the photorespiration process. Both reactions occur simultaneously and in competition at the same active site. This chain is Ribulose bisphosphate carboxylase large chain, found in Calycophyllum candidissimum (Degame lemonwood tree).